Here is a 582-residue protein sequence, read N- to C-terminus: MHILQVITGATLVSVPFVSAIPSSTSEFLPSTAEQNSAVLHSQGRSPPRLWTRLRDSIIETIWRVPSRQHNPSRIPSSLSIPRAPSSIRARYGDDVVLRFTIRSQNDVQALIEASNILFLDIWASTNEWVDIRLAKDVVSSLLGLLPSSLRTAHVPIIHDLAQAVYESYPQPVSSVPNPHHAFSPSVQQSSETQNIFFQDYQPLSVIIPWMRLLASMFSTHVRLVNLGTSYEGREIVGFRIGVRPANADLPTERRKAIVITGGSHAREWIGVSTVNYVAYSLITGYGKSRAITKLVEEFDWVLIPTMNPDGYVYTWETDRLWRKNRQENNLQFCPGVDLDRTWGYEWDGSDSRSNPCSEDFAGDGPFGGRESKVIAQWALNETNHHNVTFVGFLDLHSYSQQILYPYSYSCTNIPPTLENLEELAIGIAKAIRLTDHEHYDVSSACEGSVSSHKKRRGAALRSMQSAGGSALDWFYHDLHVRYAYQLKLRDKGGYGFLLPKKNIVPTGKEVYNAVLVFGQFLLGRGAQDIDWEGDFQFPAHSRPNVPEKEYRGPDEEYEISNQLEDDDNENDTLLGFRTQKV.

An N-terminal signal peptide occupies residues 1–20 (MHILQVITGATLVSVPFVSA). Residues 21 to 172 (IPSSTSEFLP…QAVYESYPQP (152 aa)) constitute a propeptide that is removed on maturation. Positions 200-522 (DYQPLSVIIP…NAVLVFGQFL (323 aa)) constitute a Peptidase M14 domain. Positions 265 and 268 each coordinate Zn(2+). Substrate-binding positions include 265–268 (HARE), arginine 323, and 340–341 (DR). Cysteine 334 and cysteine 357 form a disulfide bridge. Asparagine 381 and asparagine 387 each carry an N-linked (GlcNAc...) asparagine glycan. Histidine 397 contacts Zn(2+). Substrate is bound at residue 398–399 (SY). A compositionally biased stretch (acidic residues) spans 561–571 (SNQLEDDDNEN). Positions 561–582 (SNQLEDDDNENDTLLGFRTQKV) are disordered. Asparagine 571 carries an N-linked (GlcNAc...) asparagine glycan.

It belongs to the peptidase M14 family. The cofactor is Zn(2+).

It is found in the vacuole. The protein resides in the secreted. Functionally, inactive carboxypeptidase that may play a role in cell wall organization and biogenesis. This chain is Inactive metallocarboxypeptidase ECM14 (ECM14), found in Coccidioides posadasii (strain RMSCC 757 / Silveira) (Valley fever fungus).